A 728-amino-acid polypeptide reads, in one-letter code: MITIVVIPTAHFSWTDTNFLNSVDYRLTSQPKIRDRFAVYAPGWLRRQLDEFSASLTASELLQALQTIPIPVKARCLLLPKPKRFAQWLLDVPSANIWHIPVTTLRATVASKHPSSDVYNYIPDHVPPSAEFDTVTRRVAAGRDIYVRSTKVLGAPLCLAAPAKYYAGYLSTHQLDGVYPDNWAPDNFHKREFCLTILPSLLGPRTFLLDVDADRDASYPLSVLWPQLRVLALKSRLLLPPVALLRRVVDPGLKPTWSADSDAAFRALRLSRPSSASKPTGFDFSALPVVDIICLFESEPDDHGRVAPGTRLTIHSVPTDLLTSLSIQEGVRYPLRQESGMFVPWVLLALLMSDDVTISGTRRSVKLETAHASARPFVHITVERCASARVVDVRGSPAMYANAVCLTLPKGSYKSTIIDTLPAMFSDLSILEQAAVIDSDALGDSLRPSFETQFLERLENLDPKLLDRAVASILSPASDTSDDAVTTVLDVFNALYREVMTPAQRSRLPLLTQQGRVLAFAHSDYELLSANIPIQVVRGSIPIDHVVNLLARRNRVGGTALQVLLDYCYRTQASPLAPTPAGRLYKQLFGPWLMVPRLSDPLIKLRLVASAPAKVLRAAGWTIDGDPPLEVSCLCAYVTDRAMAAALIERRLDSRALVNVGGDQLMFVEYAPPLPLVSIPRTFLLPVTYVVHWVSPQRVLLNGGNVSFTSGLEWTFDDDPQVVTSTGV.

Belongs to the reoviridae microtubule-associated protein family.

Its subcellular location is the virion. The protein localises to the host cytoplasm. It localises to the host cytoskeleton. Functionally, minor inner capsid component. Displays NTPase and RNA 5'-triphosphatase (RTPase) activities. May function as a cofactor of polymerase. Associates with microtubules and plays a role in the formation, structural organization and morphology of viral inclusions, where the assembly of cores and the replication of viral RNA occur. This Aquareovirus C (isolate Golden shiner/USA/GSRV/1977) (AQRV-C) protein is Microtubule-associated protein VP5 (S5).